We begin with the raw amino-acid sequence, 657 residues long: UvrABC system protein B (657 aa).

The Helicase ATP-binding domain occupies 25–163 (ASIKNGNKYQ…QGMVLFLEIN (139 aa)). 38–45 (GVTGSGKT) is a binding site for ATP. A Beta-hairpin motif is present at residues 91–114 (YYDYYQPEAYIPRQDLFIEKDSSI). A DEAD box motif is present at residues 130–133 (LSFD). The region spanning 433–599 (QVEILYDMAK…SVSRNVEESL (167 aa)) is the Helicase C-terminal domain. Residues 622-657 (AKIVKDLRKQMMEAADKLEFEKAAALRDEIKKMRKL) form the UVR domain.

Belongs to the UvrB family. Forms a heterotetramer with UvrA during the search for lesions. Interacts with UvrC in an incision complex.

It is found in the cytoplasm. Its function is as follows. The UvrABC repair system catalyzes the recognition and processing of DNA lesions. A damage recognition complex composed of 2 UvrA and 2 UvrB subunits scans DNA for abnormalities. Upon binding of the UvrA(2)B(2) complex to a putative damaged site, the DNA wraps around one UvrB monomer. DNA wrap is dependent on ATP binding by UvrB and probably causes local melting of the DNA helix, facilitating insertion of UvrB beta-hairpin between the DNA strands. Then UvrB probes one DNA strand for the presence of a lesion. If a lesion is found the UvrA subunits dissociate and the UvrB-DNA preincision complex is formed. This complex is subsequently bound by UvrC and the second UvrB is released. If no lesion is found, the DNA wraps around the other UvrB subunit that will check the other stand for damage. The protein is UvrABC system protein B of Campylobacter hominis (strain ATCC BAA-381 / DSM 21671 / CCUG 45161 / LMG 19568 / NCTC 13146 / CH001A).